A 365-amino-acid chain; its full sequence is tRNA N6-adenosine threonylcarbamoyltransferase (365 aa).

Fe cation is bound by residues H119 and H123. Residues L141–G145, D174, G187, and N289 contribute to the substrate site. D317 is a binding site for Fe cation. The tract at residues S341 to A365 is disordered.

Belongs to the KAE1 / TsaD family. Requires Fe(2+) as cofactor.

Its subcellular location is the cytoplasm. It catalyses the reaction L-threonylcarbamoyladenylate + adenosine(37) in tRNA = N(6)-L-threonylcarbamoyladenosine(37) in tRNA + AMP + H(+). Its function is as follows. Required for the formation of a threonylcarbamoyl group on adenosine at position 37 (t(6)A37) in tRNAs that read codons beginning with adenine. Is involved in the transfer of the threonylcarbamoyl moiety of threonylcarbamoyl-AMP (TC-AMP) to the N6 group of A37, together with TsaE and TsaB. TsaD likely plays a direct catalytic role in this reaction. In Ruegeria sp. (strain TM1040) (Silicibacter sp.), this protein is tRNA N6-adenosine threonylcarbamoyltransferase.